A 361-amino-acid polypeptide reads, in one-letter code: Serpentine receptor class X 45 (361 aa).

7 helical membrane-spanning segments follow: residues 20-40 (LLIFFTSFIGFACNTFIAFYI), 58-78 (AAGDAVFVLVWAFYFAPVLFF), 92-112 (FAQLCLICYDISIYTHLVISL), 133-153 (TTFLICSIIFVSFGFSWFLVI), 176-196 (MINVYYAEFFRGLIVISMFAI), 242-262 (LLYVIELVTYFYISLRFPVPL), and 278-298 (LLTTYAWILVHALDGVITLIF). N317 carries an N-linked (GlcNAc...) asparagine glycan.

This sequence belongs to the G-protein coupled receptor 1 family.

It is found in the cell membrane. This is Serpentine receptor class X 45 (srx-45) from Caenorhabditis elegans.